We begin with the raw amino-acid sequence, 425 residues long: MTRLDSVERAVADIGAGKAVIVIDDEDRENEGDLIFAAEKATPELVAFMVRYTSGYLCVPLDGAVCDRLGLLPMYAVNQDKHGTAYTVTVDAKNGVGTGISASDRATTMRLLADPASVAEDFTRPGHVVPLRAKDGGVLRRPGHTEAAVDLARMAGLQPAGAICEIVSQKDEGSMAQTDELRVFADEHGLALITIADLIEWRRKHEKHIERVAEARIPTRHGEFRAIGYTSIYEDVEHVALVRGEIAGPNSDGDDVLVRVHSECLTGDVFGSRRCDCGPQLDAAMAMVAREGRGVVLYMRGHEGRGIGLLHKLQAYQLQDAGDDTVDANLKLGLPADARDYGIGAQILVDLGVRSMRLLTNNPAKRVGLDGYGLHIIERVPLPVRANAENIRYLMTKRDRMGHDLTGLDDFHESVHLPGEFGGAL.

Positions 1–204 are DHBP synthase; it reads MTRLDSVERA…IADLIEWRRK (204 aa). Residues 28–29, Asp-33, 141–145, and Glu-165 each bind D-ribulose 5-phosphate; these read RE and RPGHT. Glu-29 contributes to the Mg(2+) binding site. His-144 contacts Mg(2+). Residues 205 to 425 are GTP cyclohydrolase II; that stretch reads HEKHIERVAE…HLPGEFGGAL (221 aa). A GTP-binding site is contributed by 259–263; sequence RVHSE. Residues Cys-264, Cys-275, and Cys-277 each contribute to the Zn(2+) site. GTP-binding positions include Gln-280, 303–305, and Thr-325; that span reads EGR. The Proton acceptor; for GTP cyclohydrolase activity role is filled by Asp-337. The Nucleophile; for GTP cyclohydrolase activity role is filled by Arg-339. GTP contacts are provided by Thr-360 and Lys-365.

This sequence in the N-terminal section; belongs to the DHBP synthase family. It in the C-terminal section; belongs to the GTP cyclohydrolase II family. Mg(2+) serves as cofactor. It depends on Mn(2+) as a cofactor. The cofactor is Zn(2+).

It carries out the reaction D-ribulose 5-phosphate = (2S)-2-hydroxy-3-oxobutyl phosphate + formate + H(+). The catalysed reaction is GTP + 4 H2O = 2,5-diamino-6-hydroxy-4-(5-phosphoribosylamino)-pyrimidine + formate + 2 phosphate + 3 H(+). It participates in cofactor biosynthesis; riboflavin biosynthesis; 2-hydroxy-3-oxobutyl phosphate from D-ribulose 5-phosphate: step 1/1. It functions in the pathway cofactor biosynthesis; riboflavin biosynthesis; 5-amino-6-(D-ribitylamino)uracil from GTP: step 1/4. Catalyzes the conversion of D-ribulose 5-phosphate to formate and 3,4-dihydroxy-2-butanone 4-phosphate. In terms of biological role, catalyzes the conversion of GTP to 2,5-diamino-6-ribosylamino-4(3H)-pyrimidinone 5'-phosphate (DARP), formate and pyrophosphate. The sequence is that of Riboflavin biosynthesis protein RibBA from Mycobacterium marinum (strain ATCC BAA-535 / M).